A 308-amino-acid chain; its full sequence is Ribonuclease Z (308 aa).

Positions 61, 63, 65, 66, 142, 211, and 270 each coordinate Zn(2+). Asp-65 (proton acceptor) is an active-site residue.

The protein belongs to the RNase Z family. As to quaternary structure, homodimer. Zn(2+) is required as a cofactor.

It catalyses the reaction Endonucleolytic cleavage of RNA, removing extra 3' nucleotides from tRNA precursor, generating 3' termini of tRNAs. A 3'-hydroxy group is left at the tRNA terminus and a 5'-phosphoryl group is left at the trailer molecule.. Functionally, zinc phosphodiesterase, which displays some tRNA 3'-processing endonuclease activity. Probably involved in tRNA maturation, by removing a 3'-trailer from precursor tRNA. The protein is Ribonuclease Z of Clostridium beijerinckii (strain ATCC 51743 / NCIMB 8052) (Clostridium acetobutylicum).